The chain runs to 123 residues: MSRLFLFALLGHLCFLPYLDAITSSSGPPRVQVYSRYPPDSDKSNFLNCYVSGFHPPQITIELLKDGKKMENVEQSDLSFSKDWTFNLLVSAPFDPNSNSEFACKVTHSTLNEPKVVKWDKDN.

A signal peptide spans 1-21 (MSRLFLFALLGHLCFLPYLDA). One can recognise an Ig-like C1-type domain in the interval 29–118 (PRVQVYSRYP…STLNEPKVVK (90 aa)). Cysteine 49 and cysteine 104 are joined by a disulfide.

This sequence belongs to the beta-2-microglobulin family. In terms of assembly, heterodimer of an alpha chain and a beta chain. Beta-2-microglobulin is the beta-chain of major histocompatibility complex class I molecules.

It localises to the secreted. Component of the class I major histocompatibility complex (MHC). Involved in the presentation of peptide antigens to the immune system. The polypeptide is Beta-2-microglobulin (B2M) (Monodelphis domestica (Gray short-tailed opossum)).